The primary structure comprises 166 residues: NADH-ubiquinone oxidoreductase chain 6 (166 aa).

5 helical membrane passes run 1 to 21, 26 to 46, 47 to 67, 86 to 106, and 139 to 159; these read MMYF…AFAS, IYGG…IVSL, GGSF…LVVF, TVVL…YEFF, and CGGW…FVVL.

It belongs to the complex I subunit 6 family. In terms of assembly, core subunit of respiratory chain NADH dehydrogenase (Complex I) which is composed of 45 different subunits.

The protein resides in the mitochondrion inner membrane. It catalyses the reaction a ubiquinone + NADH + 5 H(+)(in) = a ubiquinol + NAD(+) + 4 H(+)(out). Functionally, core subunit of the mitochondrial membrane respiratory chain NADH dehydrogenase (Complex I) which catalyzes electron transfer from NADH through the respiratory chain, using ubiquinone as an electron acceptor. Essential for the catalytic activity and assembly of complex I. This chain is NADH-ubiquinone oxidoreductase chain 6 (MT-ND6), found in Tachyglossus aculeatus aculeatus (Southeast Australian short-beaked echidna).